The sequence spans 60 residues: Large ribosomal subunit protein uL30 (60 aa).

This sequence belongs to the universal ribosomal protein uL30 family. As to quaternary structure, part of the 50S ribosomal subunit.

The sequence is that of Large ribosomal subunit protein uL30 from Pediococcus pentosaceus (strain ATCC 25745 / CCUG 21536 / LMG 10740 / 183-1w).